Consider the following 505-residue polypeptide: Glutamate--tRNA ligase (505 aa).

The short motif at 16–26 (PSPTGFPHVGT) is the 'HIGH' region element. A 'KMSKS' region motif is present at residues 257-261 (KLSKR). Residue K260 participates in ATP binding.

It belongs to the class-I aminoacyl-tRNA synthetase family. Glutamate--tRNA ligase type 1 subfamily. As to quaternary structure, monomer.

It localises to the cytoplasm. The catalysed reaction is tRNA(Glu) + L-glutamate + ATP = L-glutamyl-tRNA(Glu) + AMP + diphosphate. In terms of biological role, catalyzes the attachment of glutamate to tRNA(Glu) in a two-step reaction: glutamate is first activated by ATP to form Glu-AMP and then transferred to the acceptor end of tRNA(Glu). This Psychrobacter sp. (strain PRwf-1) protein is Glutamate--tRNA ligase.